A 197-amino-acid chain; its full sequence is UPF0301 protein BAV3012 (197 aa).

The protein belongs to the UPF0301 (AlgH) family.

The protein is UPF0301 protein BAV3012 of Bordetella avium (strain 197N).